The sequence spans 780 residues: ATP-dependent 6-phosphofructokinase, muscle type (780 aa).

An N-acetylthreonine modification is found at threonine 2. The interval threonine 2–histidine 390 is N-terminal catalytic PFK domain 1. ATP contacts are provided by residues glycine 25, arginine 88 to cysteine 89, and glycine 118 to serine 121. Position 119 (aspartate 119) interacts with Mg(2+). Serine 133 is subject to Phosphoserine. Substrate is bound by residues serine 164–aspartate 166, arginine 201, methionine 208–arginine 210, glutamate 264, arginine 292, and histidine 298–arginine 301. Aspartate 166 acts as the Proton acceptor in catalysis. Phosphoserine is present on serine 377. Residues isoleucine 391–histidine 401 are interdomain linker. The C-terminal regulatory PFK domain 2 stretch occupies residues threonine 402 to alanine 780. Beta-D-fructose 2,6-bisphosphate contacts are provided by residues arginine 471 and threonine 528–asparagine 532. Serine 530 carries O-linked (GlcNAc) serine glycosylation. Position 557 is an N6-(2-hydroxyisobutyryl)lysine (lysine 557). Residues arginine 566, methionine 573–glycine 575, glutamate 629, arginine 655, and histidine 661–glutamine 664 contribute to the beta-D-fructose 2,6-bisphosphate site. Serine 667 is modified (phosphoserine). Arginine 735 contributes to the beta-D-fructose 2,6-bisphosphate binding site. Position 775 is a phosphoserine (serine 775).

The protein belongs to the phosphofructokinase type A (PFKA) family. ATP-dependent PFK group I subfamily. Eukaryotic two domain clade 'E' sub-subfamily. In terms of assembly, homo- and heterotetramers. Phosphofructokinase (PFK) enzyme functions as a tetramer composed of different combinations of 3 types of subunits, called PFKM (M), PFKL (L) and PFKP (P). The composition of the PFK tetramer differs according to the tissue type it is present in. The kinetic and regulatory properties of the tetrameric enzyme are dependent on the subunit composition, hence can vary across tissues. Interacts (via C-terminus) with HK1 (via N-terminal spermatogenic cell-specific region). The cofactor is Mg(2+). GlcNAcylation decreases enzyme activity.

It localises to the cytoplasm. It catalyses the reaction beta-D-fructose 6-phosphate + ATP = beta-D-fructose 1,6-bisphosphate + ADP + H(+). It functions in the pathway carbohydrate degradation; glycolysis; D-glyceraldehyde 3-phosphate and glycerone phosphate from D-glucose: step 3/4. Allosterically activated by ADP, AMP, or fructose 2,6-bisphosphate, and allosterically inhibited by ATP or citrate. Its function is as follows. Catalyzes the phosphorylation of D-fructose 6-phosphate to fructose 1,6-bisphosphate by ATP, the first committing step of glycolysis. The polypeptide is ATP-dependent 6-phosphofructokinase, muscle type (PFKM) (Equus caballus (Horse)).